The sequence spans 327 residues: Lipid phosphate phosphatase 1 (327 aa).

A run of 6 helical transmembrane segments spans residues 51–71 (WIIL…SPFY), 93–113 (IWSV…CFYL), 118–138 (VYDL…TGVI), 187–207 (FPSG…LYLS), 217–237 (GHVA…LVGI), and 244–264 (WHHW…AAFC).

It belongs to the PA-phosphatase related phosphoesterase family. As to expression, strongly expressed in leaves, moderately in roots, weakly in floral hamps and flower buds, and not detected in adult flowers and seedpods.

Its subcellular location is the membrane. Its activity is regulated as follows. PA phosphatase activity inhibited by N-ethylmaleimide with an IC(50) value of 10 mM. Functionally, plays a general role in cellular responses to stress, may be by attenuating the signal produced by phospholipases. Exhibits both diacylglycerol pyrophosphate (DGPP) phosphatase and phosphatidate (PA) phosphatase activities. Substrate preference is diacylglycerol pyrophosphate &gt; phosphatidate. The sequence is that of Lipid phosphate phosphatase 1 (LPP1) from Arabidopsis thaliana (Mouse-ear cress).